The sequence spans 1117 residues: Telomerase reverse transcriptase (1117 aa).

Residues 1–191 form a TEN region; it reads MQKINNINNN…VKQKKWYKNN (191 aa). The interval 217-519 is RBD; sequence NQYIYPEIQR…ENLEKVEEKL (303 aa). The region spanning 517–881 is the Reverse transcriptase domain; that stretch reads EKLIPEDSFQ…NECQWIGKSI (365 aa). The RT stretch occupies residues 520–887; that stretch reads IPEDSFQKYP…GKSIDMNTLE (368 aa). Position 618 (D618) interacts with Mg(2+). Residues 638 to 742 form a TRAP region; sequence SDLIQDTYFI…NQDKPRCITK (105 aa). Positions 815 and 816 each coordinate Mg(2+). The tract at residues 888–1117 is CTE; the sequence is IKSIQKQTQQ…SAKSNQQNTN (230 aa).

The protein belongs to the reverse transcriptase family. Telomerase subfamily. In terms of assembly, component of the telomerase holoenzyme complex, composed of the catalytic core (the catalytic subunit TERT, the telomerase RNA template component TER and TAP65/p65), which is associated with two heterotrimeric subcomplexes: (i) the replication protein A (RPA)-related subcomplex, composed of TEB1, RPA2/TEB2 and RPA3/TEB3 and (ii) the CST-like subcomplex, composed of TAP75/p75, TAP45/p45 and TAP19/p19. TEB1 and the CST-like subcomplex are tethered to the catalytic core by TAP50/p50.

The protein resides in the nucleus. The protein localises to the chromosome. Its subcellular location is the telomere. The enzyme catalyses DNA(n) + a 2'-deoxyribonucleoside 5'-triphosphate = DNA(n+1) + diphosphate. Catalytic component of telomerase, an essential ribonucleoprotein enzyme that copies new telomeric repeats onto chromosome ends by repetitively synthesizing the short telomere-repeat sequence 5'-TTGGGG-3' using an RNA template component TER. TERT is a reverse transcriptase that adds simple sequence repeats to chromosome ends by copying a template sequence within the RNA component of the enzyme. This is Telomerase reverse transcriptase from Tetrahymena thermophila (strain SB210).